We begin with the raw amino-acid sequence, 546 residues long: MTTNYIFVTGGVVSSLGKGIAAASLAAILEARGLKVTMMKLDPYINVDPGTMSPTQHGEVFVTEDGAETDLDLGHYERFIRTKMTKRNNFTAGRVYSDVLAKERRGDYLGATIQVIPHITNSIKERVISGAAGHDIALVEVGGTVGDIESLPFMEAIRQLAVELGRERAMFMHLTLVPYLAAAGEVKTKPTQHSVKELLSIGIQPDILVCRSDRNIPSNERKKIALFCNVQENAVISMRDVDSIYKIPQLIKAQGTDELVCKRFGITAPEADLSEWEQVIYEEANPTGEVTIGMVGKYIELPDAYKSVNEALKHAGLKNRLSVNIKYVDSQDVESRGVEVLEGLDAILVPGGFGDRGVEGKILAAQYARENKVPYLGICLGMQVALIEYARNVAKMEGAHSSEFCTETKYPVVGLITEWTDGEGKVEERTETSDLGGTMRLGSQLCHLAKGTKAYELYGSATIHERHRHRYEVNNNLRPQIEKAGLKVSGLSADKKLVEVIENPNHPWFVAAQFHPEFTSTPRDGHPLFAGFVKAAGEFQRGELEK.

An amidoligase domain region spans residues 1–266 (MTTNYIFVTG…DELVCKRFGI (266 aa)). A CTP-binding site is contributed by S14. S14 contacts UTP. ATP-binding positions include 15–20 (SLGKGI) and D72. Mg(2+) contacts are provided by D72 and E140. CTP-binding positions include 147–149 (DIE), 187–192 (KTKPTQ), and K223. Residues 187 to 192 (KTKPTQ) and K223 contribute to the UTP site. 239 to 241 (RDV) is an ATP binding site. Residues 291 to 542 (TIGMVGKYIE…VKAAGEFQRG (252 aa)) enclose the Glutamine amidotransferase type-1 domain. G352 provides a ligand contact to L-glutamine. Residue C379 is the Nucleophile; for glutamine hydrolysis of the active site. Residues 380 to 383 (LGMQ), E403, and R470 each bind L-glutamine. Catalysis depends on residues H515 and E517.

The protein belongs to the CTP synthase family. Homotetramer.

It catalyses the reaction UTP + L-glutamine + ATP + H2O = CTP + L-glutamate + ADP + phosphate + 2 H(+). The catalysed reaction is L-glutamine + H2O = L-glutamate + NH4(+). The enzyme catalyses UTP + NH4(+) + ATP = CTP + ADP + phosphate + 2 H(+). It functions in the pathway pyrimidine metabolism; CTP biosynthesis via de novo pathway; CTP from UDP: step 2/2. Its activity is regulated as follows. Allosterically activated by GTP, when glutamine is the substrate; GTP has no effect on the reaction when ammonia is the substrate. The allosteric effector GTP functions by stabilizing the protein conformation that binds the tetrahedral intermediate(s) formed during glutamine hydrolysis. Inhibited by the product CTP, via allosteric rather than competitive inhibition. Its function is as follows. Catalyzes the ATP-dependent amination of UTP to CTP with either L-glutamine or ammonia as the source of nitrogen. Regulates intracellular CTP levels through interactions with the four ribonucleotide triphosphates. In Vibrio atlanticus (strain LGP32) (Vibrio splendidus (strain Mel32)), this protein is CTP synthase.